The sequence spans 182 residues: Ribosome maturation factor RimM (182 aa).

The PRC barrel domain occupies Glu102–Phe182.

The protein belongs to the RimM family. Binds ribosomal protein uS19.

It is found in the cytoplasm. Functionally, an accessory protein needed during the final step in the assembly of 30S ribosomal subunit, possibly for assembly of the head region. Essential for efficient processing of 16S rRNA. May be needed both before and after RbfA during the maturation of 16S rRNA. It has affinity for free ribosomal 30S subunits but not for 70S ribosomes. The protein is Ribosome maturation factor RimM of Salmonella enteritidis PT4 (strain P125109).